Here is a 263-residue protein sequence, read N- to C-terminus: Histidine racemase (263 aa).

The active-site Proton acceptor is Cys67. Cys209 (proton donor) is an active-site residue.

Belongs to the histidine racemase family. In terms of assembly, homodimer.

It carries out the reaction L-histidine = D-histidine. In terms of biological role, cofactor-independent isomerase that catalyzes the reversible conversion of L-histidine to D-histidine. May play a role in growth of F.nucleatum. The polypeptide is Histidine racemase (Fusobacterium nucleatum subsp. nucleatum (strain ATCC 23726 / VPI 4351)).